The chain runs to 99 residues: Cell division protein FtsB (99 aa).

At 1–3 (MKF) the chain is on the cytoplasmic side. A helical transmembrane segment spans residues 4 to 21 (FVIALIVLLGLLQYRLWS). Residues 22–99 (GDNSLPEYFV…GDRSVSSPSQ (78 aa)) are Periplasmic-facing. Residues 31–73 (VLQKQIAAQQEGNAKLNERNQVLKEEIIDLKSGTEAIEERARN) adopt a coiled-coil conformation.

This sequence belongs to the FtsB family. Part of a complex composed of FtsB, FtsL and FtsQ.

It is found in the cell inner membrane. Its function is as follows. Essential cell division protein. May link together the upstream cell division proteins, which are predominantly cytoplasmic, with the downstream cell division proteins, which are predominantly periplasmic. The polypeptide is Cell division protein FtsB (Shewanella sp. (strain ANA-3)).